Here is a 508-residue protein sequence, read N- to C-terminus: ATP synthase subunit alpha, mitochondrial (508 aa).

171–178 (GDRQTGKT) serves as a coordination point for ATP.

This sequence belongs to the ATPase alpha/beta chains family. In terms of assembly, F-type ATPases have 2 components, CF(1) - the catalytic core - and CF(0) - the membrane proton channel. CF(1) has five subunits: alpha(3), beta(3), gamma(1), delta(1), epsilon(1). CF(0) has three main subunits: a, b and c.

The protein resides in the mitochondrion. It localises to the mitochondrion inner membrane. Mitochondrial membrane ATP synthase (F(1)F(0) ATP synthase or Complex V) produces ATP from ADP in the presence of a proton gradient across the membrane which is generated by electron transport complexes of the respiratory chain. F-type ATPases consist of two structural domains, F(1) - containing the extramembraneous catalytic core, and F(0) - containing the membrane proton channel, linked together by a central stalk and a peripheral stalk. During catalysis, ATP synthesis in the catalytic domain of F(1) is coupled via a rotary mechanism of the central stalk subunits to proton translocation. Subunits alpha and beta form the catalytic core in F(1). Rotation of the central stalk against the surrounding alpha(3)beta(3) subunits leads to hydrolysis of ATP in three separate catalytic sites on the beta subunits. Subunit alpha does not bear the catalytic high-affinity ATP-binding sites. This is ATP synthase subunit alpha, mitochondrial (ATPA) from Zea mays (Maize).